The chain runs to 265 residues: Acyl-[acyl-carrier-protein]--UDP-N-acetylglucosamine O-acyltransferase (265 aa).

Belongs to the transferase hexapeptide repeat family. LpxA subfamily. As to quaternary structure, homotrimer.

The protein localises to the cytoplasm. It carries out the reaction a (3R)-hydroxyacyl-[ACP] + UDP-N-acetyl-alpha-D-glucosamine = a UDP-3-O-[(3R)-3-hydroxyacyl]-N-acetyl-alpha-D-glucosamine + holo-[ACP]. It functions in the pathway glycolipid biosynthesis; lipid IV(A) biosynthesis; lipid IV(A) from (3R)-3-hydroxytetradecanoyl-[acyl-carrier-protein] and UDP-N-acetyl-alpha-D-glucosamine: step 1/6. Involved in the biosynthesis of lipid A, a phosphorylated glycolipid that anchors the lipopolysaccharide to the outer membrane of the cell. This is Acyl-[acyl-carrier-protein]--UDP-N-acetylglucosamine O-acyltransferase from Polynucleobacter asymbioticus (strain DSM 18221 / CIP 109841 / QLW-P1DMWA-1) (Polynucleobacter necessarius subsp. asymbioticus).